The following is a 189-amino-acid chain: Pyridoxal 5'-phosphate synthase subunit PdxT (189 aa).

L-glutamine is bound at residue 52 to 54 (GES). Residue C81 is the Nucleophile of the active site. Residues R108 and 136-137 (IR) contribute to the L-glutamine site. Active-site charge relay system residues include H172 and E174.

It belongs to the glutaminase PdxT/SNO family. In the presence of PdxS, forms a dodecamer of heterodimers. Only shows activity in the heterodimer.

It carries out the reaction aldehydo-D-ribose 5-phosphate + D-glyceraldehyde 3-phosphate + L-glutamine = pyridoxal 5'-phosphate + L-glutamate + phosphate + 3 H2O + H(+). It catalyses the reaction L-glutamine + H2O = L-glutamate + NH4(+). It participates in cofactor biosynthesis; pyridoxal 5'-phosphate biosynthesis. Catalyzes the hydrolysis of glutamine to glutamate and ammonia as part of the biosynthesis of pyridoxal 5'-phosphate. The resulting ammonia molecule is channeled to the active site of PdxS. The chain is Pyridoxal 5'-phosphate synthase subunit PdxT from Haemophilus ducreyi (strain 35000HP / ATCC 700724).